Here is a 357-residue protein sequence, read N- to C-terminus: Maleylacetate reductase 1 (357 aa).

It belongs to the iron-containing alcohol dehydrogenase family.

The enzyme catalyses 3-oxoadipate + NAD(+) = maleylacetate + NADH + H(+). It carries out the reaction 3-oxoadipate + NADP(+) = maleylacetate + NADPH + H(+). It participates in aromatic compound metabolism; 3-chlorocatechol degradation. Functionally, plays a major role in the degradation of chloroaromatic compounds by channeling maleylacetate and some of its substituted derivatives into the 3-oxoadipate pathway. This enzyme converts maleylacetate and 2-chloromaleylacetate with similar efficiencies. The polypeptide is Maleylacetate reductase 1 (macA) (Rhodococcus opacus (Nocardia opaca)).